The chain runs to 213 residues: Uridine kinase (213 aa).

14 to 21 (GASASGKS) is an ATP binding site.

Belongs to the uridine kinase family.

Its subcellular location is the cytoplasm. The catalysed reaction is uridine + ATP = UMP + ADP + H(+). It carries out the reaction cytidine + ATP = CMP + ADP + H(+). It functions in the pathway pyrimidine metabolism; CTP biosynthesis via salvage pathway; CTP from cytidine: step 1/3. Its pathway is pyrimidine metabolism; UMP biosynthesis via salvage pathway; UMP from uridine: step 1/1. The sequence is that of Uridine kinase from Vibrio parahaemolyticus serotype O3:K6 (strain RIMD 2210633).